Consider the following 374-residue polypeptide: 4-hydroxy-3-methylbut-2-en-1-yl diphosphate synthase (flavodoxin) (374 aa).

C270, C273, C305, and E312 together coordinate [4Fe-4S] cluster.

The protein belongs to the IspG family. Requires [4Fe-4S] cluster as cofactor.

It carries out the reaction (2E)-4-hydroxy-3-methylbut-2-enyl diphosphate + oxidized [flavodoxin] + H2O + 2 H(+) = 2-C-methyl-D-erythritol 2,4-cyclic diphosphate + reduced [flavodoxin]. It functions in the pathway isoprenoid biosynthesis; isopentenyl diphosphate biosynthesis via DXP pathway; isopentenyl diphosphate from 1-deoxy-D-xylulose 5-phosphate: step 5/6. Converts 2C-methyl-D-erythritol 2,4-cyclodiphosphate (ME-2,4cPP) into 1-hydroxy-2-methyl-2-(E)-butenyl 4-diphosphate. The protein is 4-hydroxy-3-methylbut-2-en-1-yl diphosphate synthase (flavodoxin) of Cellvibrio japonicus (strain Ueda107) (Pseudomonas fluorescens subsp. cellulosa).